The chain runs to 302 residues: Recombination-associated protein RdgC (302 aa).

The protein belongs to the RdgC family.

Its subcellular location is the cytoplasm. The protein localises to the nucleoid. In terms of biological role, may be involved in recombination. The polypeptide is Recombination-associated protein RdgC (Tolumonas auensis (strain DSM 9187 / NBRC 110442 / TA 4)).